The sequence spans 312 residues: Protoheme IX farnesyltransferase (312 aa).

Helical transmembrane passes span 12 to 32 (LALT…PAML), 41 to 61 (FGLI…ANTF), 93 to 113 (VFAW…CHSW), 114 to 134 (LAAG…TKWL), 141 to 161 (NVIW…AVIT), 168 to 188 (FHAG…IFFW), 240 to 260 (VPAA…WFII), and 290 to 310 (ILFV…AHAV).

Belongs to the UbiA prenyltransferase family. Protoheme IX farnesyltransferase subfamily.

Its subcellular location is the cell membrane. The enzyme catalyses heme b + (2E,6E)-farnesyl diphosphate + H2O = Fe(II)-heme o + diphosphate. The protein operates within porphyrin-containing compound metabolism; heme O biosynthesis; heme O from protoheme: step 1/1. In terms of biological role, converts heme B (protoheme IX) to heme O by substitution of the vinyl group on carbon 2 of heme B porphyrin ring with a hydroxyethyl farnesyl side group. This chain is Protoheme IX farnesyltransferase, found in Corynebacterium jeikeium (strain K411).